The following is a 53-amino-acid chain: Reg12l (53 aa).

A propeptide spanning residues R1 to R34 is cleaved from the precursor. Disulfide bonds link C36–C50, C37–C48, and C42–C51.

Belongs to the conotoxin M superfamily. Expressed by the venom duct.

Its subcellular location is the secreted. In Conus regius (Crown cone), this protein is Reg12l.